The following is a 102-amino-acid chain: Small ribosomal subunit protein uS10 (102 aa).

Belongs to the universal ribosomal protein uS10 family. In terms of assembly, part of the 30S ribosomal subunit.

Its function is as follows. Involved in the binding of tRNA to the ribosomes. This Pelobacter propionicus (strain DSM 2379 / NBRC 103807 / OttBd1) protein is Small ribosomal subunit protein uS10.